Reading from the N-terminus, the 394-residue chain is ATP phosphoribosyltransferase regulatory subunit (394 aa).

The protein belongs to the class-II aminoacyl-tRNA synthetase family. HisZ subfamily. As to quaternary structure, heteromultimer composed of HisG and HisZ subunits.

The protein resides in the cytoplasm. It functions in the pathway amino-acid biosynthesis; L-histidine biosynthesis; L-histidine from 5-phospho-alpha-D-ribose 1-diphosphate: step 1/9. Its function is as follows. Required for the first step of histidine biosynthesis. May allow the feedback regulation of ATP phosphoribosyltransferase activity by histidine. The sequence is that of ATP phosphoribosyltransferase regulatory subunit from Pseudomonas paraeruginosa (strain DSM 24068 / PA7) (Pseudomonas aeruginosa (strain PA7)).